The following is a 502-amino-acid chain: Beta-amyrin 28-monooxygenase CYP716A379 (502 aa).

The chain crosses the membrane as a helical; Signal-anchor for type II membrane protein span at residues L3–V23. N-linked (GlcNAc...) asparagine glycans are attached at residues N88 and N181. C444 contacts heme.

It belongs to the cytochrome P450 family. It depends on heme as a cofactor. In terms of tissue distribution, mainly expressed in flowers and flower buds, to a lesser extent in young leaves and, at low levels, in old leaves, stems and roots.

The protein resides in the membrane. The catalysed reaction is beta-amyrin + 3 reduced [NADPH--hemoprotein reductase] + 3 O2 = oleanolate + 3 oxidized [NADPH--hemoprotein reductase] + 4 H2O + 4 H(+). It participates in secondary metabolite biosynthesis; terpenoid biosynthesis. Component of the oleanane-type triterpene saponins (e.g. saponarioside A and saponarioside B) biosynthetic pathway, leading to the production of natural products with detergent properties used as traditional sources of soap. An oxidoreductase that facilitates the oxidation of the methyl group to a carboxyl group at the C-28 position of beta-amyrin, resulting in the formation of oleanolic acid. Catalyzes also the subsequent oxidation of the methyl group to a&lt; carboxyl group at the C-16 alpha position of oleanolic acid, resulting in the formation of echinocystic acid. This is Beta-amyrin 28-monooxygenase CYP716A379 from Saponaria officinalis (Common soapwort).